A 131-amino-acid chain; its full sequence is MAAPRGRPKKDLTMEDLTAKISQLTVENRELRKALGSTADPRDRPLTATEKEAQLTATVGALSAAAAKKIEARVRTIFSKVVTQKQVDDALKGLSLRIDVCMSDGGTAKPPPGANNRRRRGASTTRAGVDD.

The segment at Ser-103–Asp-131 is disordered. Positions Ala-122 to Asp-131 are enriched in low complexity. Residue Ser-123 is modified to Phosphoserine; by host.

Belongs to the herpesviridae BLRF2 family. In terms of assembly, homooligomer; homooligomerizes and binds double-stranded DNA (dsDNA) cooperatively. Interacts with host CGAS. Interacts with PQBP1.

The protein localises to the host cytoplasm. The protein resides in the virion tegument. In terms of biological role, plays a role in the inhibition of host innate immune system by targeting the CGAS enzymatic activity which is the principal cytosolic DNA sensor that detects invading viral DNA. Acts by inhibiting CGAS-DNA phase separation: directly binds double-stranded DNA (dsDNA) in a length dependent but sequence independent manner and is able to form DNA-induced phase separation in infected cells. DNA phase separation of ORF52 mediates disruption of liquid-like droplets in which CGAS is activated, thereby preventing CGAS activity. Targets also the HDP-RNP complex composed of DNA-PK subunits and paraspeckle proteins. This complex is a key nuclear regulator of DNA-mediated activation of innate immune response through the cGAS-STING pathway. This Homo sapiens (Human) protein is Tegument protein ORF52.